We begin with the raw amino-acid sequence, 225 residues long: MNPCVLPTPLPDLDGDKRWHSIHRRFISDCREKDPDVIFLGDCIFETVQDTEAWNKYFAPLHCLNFSIRDDCTEHVLWRIENGALDNVNPKIVVLHVGTNNVRNSAEEVAEGVLANVTKIRQKLPNAYIVLPSLLPRGQQPNKLREKNAKINEVVNGLTKGLYRVQTVAIDKGLVQTDGSISHHDMFDYKNLTNAGAKKILEPLYDLLSQILNENEPENDLTPSE.

It belongs to the 'GDSL' lipolytic enzyme family. Platelet-activating factor acetylhydrolase IB beta/gamma subunits subfamily. In terms of assembly, does not interact with Lis-1.

This chain is Platelet-activating factor acetylhydrolase IB subunit beta homolog (Paf-AHalpha), found in Drosophila melanogaster (Fruit fly).